The primary structure comprises 176 residues: Large ribosomal subunit protein eL20 (176 aa).

Belongs to the eukaryotic ribosomal protein eL20 family. As to quaternary structure, component of the large ribosomal subunit.

It localises to the cytoplasm. Component of the large ribosomal subunit. The ribosome is a large ribonucleoprotein complex responsible for the synthesis of proteins in the cell. This Ictalurus punctatus (Channel catfish) protein is Large ribosomal subunit protein eL20 (rpl18a).